The primary structure comprises 102 residues: Co-chaperonin GroES (102 aa).

Belongs to the GroES chaperonin family. As to quaternary structure, heptamer of 7 subunits arranged in a ring. Interacts with the chaperonin GroEL.

Its subcellular location is the cytoplasm. In terms of biological role, together with the chaperonin GroEL, plays an essential role in assisting protein folding. The GroEL-GroES system forms a nano-cage that allows encapsulation of the non-native substrate proteins and provides a physical environment optimized to promote and accelerate protein folding. GroES binds to the apical surface of the GroEL ring, thereby capping the opening of the GroEL channel. The chain is Co-chaperonin GroES from Chlamydia caviae (strain ATCC VR-813 / DSM 19441 / 03DC25 / GPIC) (Chlamydophila caviae).